Consider the following 833-residue polypeptide: Scavenger receptor class F member 2 (833 aa).

The signal sequence occupies residues 1-33; sequence MEGAGSRGAGPARRQGARGLGLLLLLWLLPGLA. The Extracellular segment spans residues 34–433; sequence APQDLNPRGR…ACHLETNQRK (400 aa). 6 EGF-like domains span residues 63 to 102, 114 to 145, 140 to 174, 175 to 204, 205 to 233, and 228 to 262; these read LGDE…ANCD, CKER…ARCE, WGAR…AQCA, SACY…RSCN, NQCA…ARCD, and FGAR…KYCR. 18 disulfide bridges follow: Cys-67-Cys-78, Cys-72-Cys-90, Cys-92-Cys-101, Cys-118-Cys-126, Cys-120-Cys-133, Cys-135-Cys-144, Cys-148-Cys-155, Cys-150-Cys-162, Cys-164-Cys-173, Cys-177-Cys-185, Cys-179-Cys-192, Cys-194-Cys-203, Cys-207-Cys-214, Cys-209-Cys-221, Cys-223-Cys-232, Cys-236-Cys-243, Cys-238-Cys-250, and Cys-252-Cys-261. N-linked (GlcNAc...) asparagine glycosylation is present at Asn-75. 2 N-linked (GlcNAc...) asparagine glycosylation sites follow: Asn-302 and Asn-357. Positions 364–395 constitute an EGF-like 7 domain; that stretch reads CAFVCSDCGSGHCDFQSGRCLCSPGVHGPHCN. 3 disulfide bridges follow: Cys-368/Cys-376, Cys-371/Cys-383, and Cys-385/Cys-394. An N-linked (GlcNAc...) asparagine glycan is attached at Asn-395. Residues 434–454 form a helical membrane-spanning segment; the sequence is GVMGAGALLTLLLGLLLSLLG. Over 455-833 the chain is Cytoplasmic; it reads CCCACRGKDS…SRAGTAPGAS (379 aa). Ser-538 and Ser-600 each carry phosphoserine. The interval 578–833 is disordered; it reads SLEPTGTSTP…SRAGTAPGAS (256 aa). Phosphotyrosine is present on Tyr-615. Residues 619–630 show a composition bias toward basic and acidic residues; the sequence is ARREARPARTRN. Phosphoserine occurs at positions 638, 640, and 695. Phosphothreonine is present on Thr-712. The segment covering 748 to 761 has biased composition (basic and acidic residues); sequence ELRDKTRSLGRAEK. The segment covering 781 to 798 has biased composition (low complexity); the sequence is ASASEASGSEKAAASAPA. Basic residues predominate over residues 804-816; it reads KKTPIQKPPRKKS.

In terms of assembly, homophilic and heterophilic interaction via its extracellular domain. Interacts with SCARF1. The heterophilic interaction with SCARF1, which is stronger than the homophilic interaction with itself, is suppressed by the presence of SCARF1 ligand such as Ac-LDL.

The protein localises to the membrane. Functionally, probable adhesion protein, which mediates homophilic and heterophilic interactions. In contrast to SCARF1, it poorly mediates the binding and degradation of acetylated low density lipoprotein (Ac-LDL). This is Scavenger receptor class F member 2 (Scarf2) from Mus musculus (Mouse).